Consider the following 508-residue polypeptide: MNLDFSQCFGDKGDIENITEADIISTVEFDHTGDFLATGDKGGRVVLFERNQSKKKQSCEYKFFTEFQSHDAEFDYLKSLEIEEKINKIKWLKSANDSLCLLSTNDKTIKLWKIQERQIKLVSENNLNGLNHLPSSNIGIESLKLPQLQLHDKLISAQPKKIYANAHAYHINSISVNSDQETYLSADDLRINLWNLGIADQSFNIVDIKPANMEELTEVITSAEFHPLQCNLFMYSSSKGTIKLSDMRSNSLCDSHAKIFEEYLDPSSHNFFTEITSSISDVKFSHDGRYIASRDYMTVKIWDLAMENKPIKTIDVHEHLRERLCDTYENDAIFDKFEVQFGGDNKSVMTGSYNNQFVIYPNAVNTGNDDKPKFKSAFKNSSKRSKKNGFSTRTTDDDDDDDDDDDDEEADDEFDEEVPATKNSPGSQLEDDDEQEEIILQADKSAFKSKKSGQHPMRRRMTSGVGSNLGREFDDVDFKKSILHLSWHPRENSVAIAATNNLYIFSTL.

WD repeat units lie at residues 19 to 58 (TEAD…KKQS), 81 to 122 (EIEE…IKLV), 166 to 204 (AHAY…QSFN), 215 to 255 (ELTE…LCDS), 274 to 312 (EITS…KPIK), and 329 to 370 (ENDA…GNDD). The tract at residues 369-466 (DDKPKFKSAF…MRRRMTSGVG (98 aa)) is disordered. Over residues 396–418 (DDDDDDDDDDDDEEADDEFDEEV) the composition is skewed to acidic residues. Over residues 447 to 461 (FKSKKSGQHPMRRRM) the composition is skewed to basic residues. The WD 7 repeat unit spans residues 477-507 (DFKKSILHLSWHPRENSVAIAATNNLYIFST).

This sequence belongs to the phosphatase 2A regulatory subunit B family. As to quaternary structure, PP2A exists in several trimeric forms, all of which consist of a core composed of a catalytic subunit associated with a 65 kDa (PR65) (Subunit A) and a 55 kDa (PR55) (Subunit B) regulatory subunit.

Phosphatase 2A affects a variety of biological processes in the cell such as transcription, cell cycle progression and cellular morphogenesis, and provides an initial identification of critical substrates for this phosphatase. The regulatory subunit may direct the catalytic subunit to distinct, albeit overlapping, subsets of substrates. This chain is Protein phosphatase PP2A regulatory subunit B (CDC55), found in Candida tropicalis (Yeast).